The sequence spans 164 residues: Thiol peroxidase (164 aa).

In terms of domain architecture, Thioredoxin spans 18 to 164 (KKVGDSAPDF…YEAVLSHLNK (147 aa)). Cys60 serves as the catalytic Cysteine sulfenic acid (-SOH) intermediate. Cys60 and Cys94 are disulfide-bonded.

The protein belongs to the peroxiredoxin family. Tpx subfamily. As to quaternary structure, homodimer.

The enzyme catalyses a hydroperoxide + [thioredoxin]-dithiol = an alcohol + [thioredoxin]-disulfide + H2O. Thiol-specific peroxidase that catalyzes the reduction of hydrogen peroxide and organic hydroperoxides to water and alcohols, respectively. Plays a role in cell protection against oxidative stress by detoxifying peroxides. In Oceanobacillus iheyensis (strain DSM 14371 / CIP 107618 / JCM 11309 / KCTC 3954 / HTE831), this protein is Thiol peroxidase.